Consider the following 563-residue polypeptide: Coiled-coil domain-containing protein 38 (563 aa).

Over residues 1–11 (MSSNLLPTLNS) the composition is skewed to polar residues. The segment at 1–21 (MSSNLLPTLNSGGKVKDGSTK) is disordered. A coiled-coil region spans residues 129-212 (KRNTIKKFEK…VKSEIAKTEF (84 aa)). The tract at residues 272–311 (ESGRTAVLSEDASQGRDSQGKPSRSLTRTPEKKKSNLAES) is disordered. The segment covering 282–299 (DASQGRDSQGKPSRSLTR) has biased composition (polar residues). Coiled coils occupy residues 384–415 (NIEFLLEQEKMLKANCVREEEKAAELQLKSKL) and 497–522 (RDEKMKEKQRHQQERLKAALEKAVAQ). The tract at residues 522 to 563 (QPKKKLGRRLVFHSKPPSGNKQQLPLVNETKTKSQEEEYFFT) is disordered. Basic residues predominate over residues 523–533 (PKKKLGRRLVF).

As to quaternary structure, interacts with CCDC42, CFAP53, IFT88 and ODF2. Interacts with CCDC146. Interacts with TEKT3. Interacts with ubiquitinated histone H2A.

It is found in the cytoplasm. The protein resides in the cytoskeleton. The protein localises to the microtubule organizing center. Its subcellular location is the centrosome. It localises to the perinuclear region. It is found in the cell projection. The protein resides in the cilium. The protein localises to the flagellum. In terms of biological role, essential for male fertility. Required for sperm flagellum biogenesis. Also required for acrosome biogenesis. Required for the attachment of developing acrosomes to the nucleus during spermiogenesis and may be involved in the transport of fibrous sheath components. This is Coiled-coil domain-containing protein 38 (CCDC38) from Homo sapiens (Human).